Reading from the N-terminus, the 147-residue chain is MNRSDVTDLIIEAKVTRGIAWAQVAERVGRSKEWTTAACLGQMAFDAAGARAVMELFGLPPEAEPWLREVPYKGSLPTQVPADPLIYRFYELISVYGTTFKALIHEEFGDGIMSAIDFRMDLQREPDPNGDRVRIEMSGKFLPYKTY.

Active-site residues include R88, E91, and S114.

This sequence belongs to the cyanase family.

It catalyses the reaction cyanate + hydrogencarbonate + 3 H(+) = NH4(+) + 2 CO2. Catalyzes the reaction of cyanate with bicarbonate to produce ammonia and carbon dioxide. The chain is Cyanate hydratase from Cupriavidus necator (strain ATCC 17699 / DSM 428 / KCTC 22496 / NCIMB 10442 / H16 / Stanier 337) (Ralstonia eutropha).